The following is a 472-amino-acid chain: MDLLSSLPDEVRCLILSFLTTKESASTSVLSKKWRNLFALVPNLDFDDSEFLHPEEGKRERDGILQSFMDFVDRVLSLQGNSSIRKFSLKCETGVPPARVNRWLCEVLQRDVSDIDLTIDLGYGYYLPEELFVSETLVNLKLKSAFNIDWWPGAEGTSLPMLKSLCVYGVRVFCDDELQELLPCFPVLEELQMSNMQWLDSDETVSSATLTTLHITGIRSENPKSISFDTPNLLSFVYTDFVAEDYPLVNMKNLSLARLALRANDDQIKRVRGPSNDLLEYDVVRHFGNVVKLMNGIQNVQELHLCPDTLELLSVCCESMPVFNNVKKLLIYSDEDRGWQAVPVLLRNCPRLETLIFEGIVHHVTDKCGDACDCIFRKDKGRSLKSCPVKVVEINGFGVTMKEKYLIEHFLDYFSCLKEMKIYINCEEDGVTQQVMKNREVSKLVLDEMEEYNEFYSCNVKLFLCKKKSIPQ.

Residues 1–49 (MDLLSSLPDEVRCLILSFLTTKESASTSVLSKKWRNLFALVPNLDFDDS) enclose the F-box domain.

The protein is F-box protein At3g03040 of Arabidopsis thaliana (Mouse-ear cress).